A 96-amino-acid polypeptide reads, in one-letter code: Translation initiation factor 1A 1 (96 aa).

An S1-like domain is found at 8–82 (GSHDLRMPDD…EKGDITWRYE (75 aa)).

The protein belongs to the eIF-1A family.

Its function is as follows. Seems to be required for maximal rate of protein biosynthesis. Enhances ribosome dissociation into subunits and stabilizes the binding of the initiator Met-tRNA(I) to 40 S ribosomal subunits. The sequence is that of Translation initiation factor 1A 1 from Haloquadratum walsbyi (strain DSM 16790 / HBSQ001).